The sequence spans 136 residues: Large ribosomal subunit protein uL13 (136 aa).

This sequence belongs to the universal ribosomal protein uL13 family. As to quaternary structure, part of the 50S ribosomal subunit.

Functionally, this protein is one of the early assembly proteins of the 50S ribosomal subunit, although it is not seen to bind rRNA by itself. It is important during the early stages of 50S assembly. The protein is Large ribosomal subunit protein uL13 of Thermoplasma volcanium (strain ATCC 51530 / DSM 4299 / JCM 9571 / NBRC 15438 / GSS1).